A 1096-amino-acid polypeptide reads, in one-letter code: Eukaryotic translation initiation factor 3 subunit A (1096 aa).

The PCI domain occupies 323–502 (QATRVLLATL…GSIHFGAADA (180 aa)). Coiled coils occupy residues 591–643 (SERQ…IDRK), 677–761 (SVLR…RMQK), and 811–839 (KEGAEERMASAREVAEQTRRDEQEKERRA). Basic and acidic residues predominate over residues 808–852 (ELPKEGAEERMASAREVAEQTRRDEQEKERRAVRESQRPSKREIV). Residues 808–1096 (ELPKEGAEER…ADDDRNWRQK (289 aa)) are disordered. A compositionally biased stretch (polar residues) spans 865-875 (AQPTQPRTISS). Composition is skewed to basic and acidic residues over residues 878–890 (FGERFVEGERYRE), 933–942 (SNREQARGEA), and 955–973 (QRDRDQSVGKQPLMEKRGE). Positions 1008 to 1023 (DSSQRTSAATPTTQPW) are enriched in polar residues. Over residues 1085–1096 (GAADDDRNWRQK) the composition is skewed to basic and acidic residues.

Belongs to the eIF-3 subunit A family. As to quaternary structure, component of the eukaryotic translation initiation factor 3 (eIF-3) complex.

It localises to the cytoplasm. RNA-binding component of the eukaryotic translation initiation factor 3 (eIF-3) complex, which is involved in protein synthesis of a specialized repertoire of mRNAs and, together with other initiation factors, stimulates binding of mRNA and methionyl-tRNAi to the 40S ribosome. The eIF-3 complex specifically targets and initiates translation of a subset of mRNAs involved in cell proliferation. The chain is Eukaryotic translation initiation factor 3 subunit A from Brugia malayi (Filarial nematode worm).